Consider the following 228-residue polypeptide: UPF0758 protein Reut_A2732 (228 aa).

Residues 102 to 224 (GLDSPAAVRS…VHSFAEHGEL (123 aa)) form the MPN domain. Positions 173, 175, and 186 each coordinate Zn(2+). The JAMM motif signature appears at 173-186 (HNHPSGCCTPSQSD).

This sequence belongs to the UPF0758 family.

In Cupriavidus pinatubonensis (strain JMP 134 / LMG 1197) (Cupriavidus necator (strain JMP 134)), this protein is UPF0758 protein Reut_A2732.